The primary structure comprises 686 residues: Alpha-amylase 1 (686 aa).

The Nucleophile role is filled by Glu-125. Asp-216 functions as the Proton donor in the catalytic mechanism.

It belongs to the glycosyl hydrolase 57 family.

The protein resides in the cytoplasm. It catalyses the reaction Endohydrolysis of (1-&gt;4)-alpha-D-glucosidic linkages in polysaccharides containing three or more (1-&gt;4)-alpha-linked D-glucose units.. Functionally, this amylase is a highly liquefying-type: oligomers appeared at the beginning of incubation, followed by a graded decrease in the amounts of maltotriose, maltose and glucose in prolonged incubation. The chain is Alpha-amylase 1 (amyA) from Dictyoglomus thermophilum (strain ATCC 35947 / DSM 3960 / H-6-12).